A 55-amino-acid polypeptide reads, in one-letter code: Large ribosomal subunit protein bL33B (55 aa).

The protein belongs to the bacterial ribosomal protein bL33 family.

The polypeptide is Large ribosomal subunit protein bL33B (Kineococcus radiotolerans (strain ATCC BAA-149 / DSM 14245 / SRS30216)).